Consider the following 251-residue polypeptide: Diphthine synthase (251 aa).

S-adenosyl-L-methionine is bound by residues leucine 9, aspartate 84, valine 87, 112-113 (SI), leucine 160, alanine 194, and histidine 219.

The protein belongs to the diphthine synthase family. As to quaternary structure, homodimer.

The enzyme catalyses 2-[(3S)-amino-3-carboxypropyl]-L-histidyl-[translation elongation factor 2] + 3 S-adenosyl-L-methionine = diphthine-[translation elongation factor 2] + 3 S-adenosyl-L-homocysteine + 3 H(+). It participates in protein modification; peptidyl-diphthamide biosynthesis. Functionally, S-adenosyl-L-methionine-dependent methyltransferase that catalyzes the trimethylation of the amino group of the modified target histidine residue in translation elongation factor 2 (EF-2), to form an intermediate called diphthine. The three successive methylation reactions represent the second step of diphthamide biosynthesis. This is Diphthine synthase from Archaeoglobus fulgidus (strain ATCC 49558 / DSM 4304 / JCM 9628 / NBRC 100126 / VC-16).